The following is a 151-amino-acid chain: Arginine repressor (151 aa).

It belongs to the ArgR family.

The protein localises to the cytoplasm. It participates in amino-acid biosynthesis; L-arginine biosynthesis [regulation]. Its function is as follows. Regulates arginine biosynthesis genes. The sequence is that of Arginine repressor from Clostridium novyi (strain NT).